Consider the following 1325-residue polypeptide: Zinc finger MYM-type protein 6 (1325 aa).

8 consecutive MYM-type zinc fingers follow at residues 113-151 (QLFCSTRCITRHSSPACLPPPPKKTCTNCSKDILNPKDV), 163-206 (KDFC…RFEV), 213-248 (HGLCSDACFSKFHSTNNLTMNCCENCGSYCYSSSGP), 296-334 (ELFCSINCLSAYRVKTVTSSGVQVSCHSCKTSAIPQYHL), 342-443 (YSFC…KPEL), 451-485 (FLFCGKNCSDEYKKKNKVVAMCDYCKLQKIIKETV), 492-531 (KPFCSEVCKFLSARDFGERWGNYCKMCSYCSQTSPNLVEN), and 538-572 (EEFCCEDCMSKFTVLFYQMAKCDGCKRQGKLSESI). Ser397 is subject to Phosphoserine. Positions 665-733 (ESTQEDAMKF…NDAELDSPPS (69 aa)) are disordered. Residues 695 to 706 (PVTQTKATSCKP) show a composition bias toward polar residues.

Expressed at high levels in heart, skeletal muscle, kidney and liver.

It is found in the nucleus. Its function is as follows. Plays a role in the regulation of cell morphology and cytoskeletal organization. The chain is Zinc finger MYM-type protein 6 (ZMYM6) from Homo sapiens (Human).